The sequence spans 461 residues: Cysteine--tRNA ligase (461 aa).

Zn(2+) is bound at residue Cys-29. The 'HIGH' region signature appears at 31-41; the sequence is MTVYDFCHIGH. Residues Cys-210, His-235, and Glu-239 each coordinate Zn(2+). A 'KMSKS' region motif is present at residues 267 to 271; that stretch reads KMSKS. Residue Lys-270 coordinates ATP.

The protein belongs to the class-I aminoacyl-tRNA synthetase family. In terms of assembly, monomer. Zn(2+) serves as cofactor.

It localises to the cytoplasm. The enzyme catalyses tRNA(Cys) + L-cysteine + ATP = L-cysteinyl-tRNA(Cys) + AMP + diphosphate. This is Cysteine--tRNA ligase from Azotobacter vinelandii (strain DJ / ATCC BAA-1303).